A 95-amino-acid chain; its full sequence is Aspartyl/glutamyl-tRNA(Asn/Gln) amidotransferase subunit C (95 aa).

Belongs to the GatC family. As to quaternary structure, heterotrimer of A, B and C subunits.

The catalysed reaction is L-glutamyl-tRNA(Gln) + L-glutamine + ATP + H2O = L-glutaminyl-tRNA(Gln) + L-glutamate + ADP + phosphate + H(+). It carries out the reaction L-aspartyl-tRNA(Asn) + L-glutamine + ATP + H2O = L-asparaginyl-tRNA(Asn) + L-glutamate + ADP + phosphate + 2 H(+). In terms of biological role, allows the formation of correctly charged Asn-tRNA(Asn) or Gln-tRNA(Gln) through the transamidation of misacylated Asp-tRNA(Asn) or Glu-tRNA(Gln) in organisms which lack either or both of asparaginyl-tRNA or glutaminyl-tRNA synthetases. The reaction takes place in the presence of glutamine and ATP through an activated phospho-Asp-tRNA(Asn) or phospho-Glu-tRNA(Gln). In Cereibacter sphaeroides (strain ATCC 17025 / ATH 2.4.3) (Rhodobacter sphaeroides), this protein is Aspartyl/glutamyl-tRNA(Asn/Gln) amidotransferase subunit C.